The following is a 158-amino-acid chain: 2-C-methyl-D-erythritol 2,4-cyclodiphosphate synthase (158 aa).

The a divalent metal cation site is built by D9 and H11. Residues 9–11 and 35–36 each bind 4-CDP-2-C-methyl-D-erythritol 2-phosphate; these read DVH and HS. H43 serves as a coordination point for a divalent metal cation. 4-CDP-2-C-methyl-D-erythritol 2-phosphate contacts are provided by residues 57-59, 62-66, 101-107, 133-136, F140, and R143; these read DIG, FPDTD, AQKPKMA, and TTTE.

This sequence belongs to the IspF family. In terms of assembly, homotrimer. The cofactor is a divalent metal cation.

The catalysed reaction is 4-CDP-2-C-methyl-D-erythritol 2-phosphate = 2-C-methyl-D-erythritol 2,4-cyclic diphosphate + CMP. It functions in the pathway isoprenoid biosynthesis; isopentenyl diphosphate biosynthesis via DXP pathway; isopentenyl diphosphate from 1-deoxy-D-xylulose 5-phosphate: step 4/6. Involved in the biosynthesis of isopentenyl diphosphate (IPP) and dimethylallyl diphosphate (DMAPP), two major building blocks of isoprenoid compounds. Catalyzes the conversion of 4-diphosphocytidyl-2-C-methyl-D-erythritol 2-phosphate (CDP-ME2P) to 2-C-methyl-D-erythritol 2,4-cyclodiphosphate (ME-CPP) with a corresponding release of cytidine 5-monophosphate (CMP). This is 2-C-methyl-D-erythritol 2,4-cyclodiphosphate synthase from Bacillus cereus (strain B4264).